A 276-amino-acid polypeptide reads, in one-letter code: Elongation factor Ts (276 aa).

Positions 79-82 are involved in Mg(2+) ion dislocation from EF-Tu; sequence TDFV.

Belongs to the EF-Ts family.

Its subcellular location is the cytoplasm. Associates with the EF-Tu.GDP complex and induces the exchange of GDP to GTP. It remains bound to the aminoacyl-tRNA.EF-Tu.GTP complex up to the GTP hydrolysis stage on the ribosome. The sequence is that of Elongation factor Ts from Buchnera aphidicola subsp. Cinara cedri (strain Cc).